Consider the following 227-residue polypeptide: MPIKAILTDIEGTTSAVSFVFDVLFPFARAHLPDFVRQHAEQPQVAAQLQAVRTQSAEPDADVERVIAILLEWIAEDRKATPLKALQGMVWEQGYNAGQLKGHVYPDAVDALQHWHQQGYRLFVYSSGSIQAQQLIFGCSEAGDLSGLFSGYFDTTSGPKREAQSYQTIANATGFAAEEILFLSDIVEELDAAKAAGMLTCGLARDGGVLAGHRHVNSFTLIDPASF.

This sequence belongs to the HAD-like hydrolase superfamily. MasA/MtnC family. As to quaternary structure, monomer. It depends on Mg(2+) as a cofactor.

The enzyme catalyses 5-methylsulfanyl-2,3-dioxopentyl phosphate + H2O = 1,2-dihydroxy-5-(methylsulfanyl)pent-1-en-3-one + phosphate. The protein operates within amino-acid biosynthesis; L-methionine biosynthesis via salvage pathway; L-methionine from S-methyl-5-thio-alpha-D-ribose 1-phosphate: step 3/6. Its pathway is amino-acid biosynthesis; L-methionine biosynthesis via salvage pathway; L-methionine from S-methyl-5-thio-alpha-D-ribose 1-phosphate: step 4/6. Its function is as follows. Bifunctional enzyme that catalyzes the enolization of 2,3-diketo-5-methylthiopentyl-1-phosphate (DK-MTP-1-P) into the intermediate 2-hydroxy-3-keto-5-methylthiopentenyl-1-phosphate (HK-MTPenyl-1-P), which is then dephosphorylated to form the acireductone 1,2-dihydroxy-3-keto-5-methylthiopentene (DHK-MTPene). In Pseudomonas syringae pv. tomato (strain ATCC BAA-871 / DC3000), this protein is Enolase-phosphatase E1.